The sequence spans 83 residues: U5-theraphotoxin-Hs1d (83 aa).

An N-terminal signal peptide occupies residues 1–21 (MKTSMFLTLTGLVLLFVVCYA). Positions 22 to 49 (SESEEKEFPKELLSSIFAADSDFKVEER) are excised as a propeptide. Cystine bridges form between cysteine 51-cysteine 63, cysteine 56-cysteine 68, and cysteine 62-cysteine 75.

It belongs to the neurotoxin 10 (Hwtx-1) family. 51 (Hntx-8) subfamily. Hntx-8 sub-subfamily. Expressed by the venom gland.

The protein resides in the secreted. Its function is as follows. Agglutinates erythrocytes. The sequence is that of U5-theraphotoxin-Hs1d from Cyriopagopus schmidti (Chinese bird spider).